Reading from the N-terminus, the 836-residue chain is Eukaryotic translation initiation factor 3 subunit C (836 aa).

Residues 1–97 (MSRFFVSGYD…RRVVKSAKEK (97 aa)) are disordered. Residues 13 to 55 (SSSEEEDLLTSSEEELMSSEQESDSEFDDEFANDDDSDSSDSD) show a composition bias toward acidic residues. Positions 86–97 (EGRRVVKSAKEK) are enriched in basic and acidic residues. In terms of domain architecture, PCI spans 586–761 (FHMHINLELL…KSINFVSSEH (176 aa)). The segment at 783–817 (DKNEKTASNGHGRKTTQQQQQQQQKEQREQTHDEN) is disordered. Positions 797 to 806 (TTQQQQQQQQ) are enriched in low complexity. The segment covering 807–817 (KEQREQTHDEN) has biased composition (basic and acidic residues).

Belongs to the eIF-3 subunit C family. As to quaternary structure, component of the eukaryotic translation initiation factor 3 (eIF-3) complex.

It is found in the cytoplasm. Component of the eukaryotic translation initiation factor 3 (eIF-3) complex, which is involved in protein synthesis of a specialized repertoire of mRNAs and, together with other initiation factors, stimulates binding of mRNA and methionyl-tRNAi to the 40S ribosome. The eIF-3 complex specifically targets and initiates translation of a subset of mRNAs involved in cell proliferation. The polypeptide is Eukaryotic translation initiation factor 3 subunit C (Meyerozyma guilliermondii (strain ATCC 6260 / CBS 566 / DSM 6381 / JCM 1539 / NBRC 10279 / NRRL Y-324) (Yeast)).